The chain runs to 161 residues: Globin CTT-VIIB-10 (161 aa).

Residues 1–16 (MKFFAVLALCIVGAIA) form the signal peptide. Residues 18-161 (PLTADEASLV…NTFAIVVPRL (144 aa)) form the Globin domain. Heme b-binding residues include H76 and H111.

Belongs to the globin family. As to quaternary structure, homodimer.

In Chironomus thummi thummi (Midge), this protein is Globin CTT-VIIB-10 (CTT-7B10).